The chain runs to 819 residues: Advillin (819 aa).

Positions Met-1 to Asp-731 are core. The Gelsolin-like 1 repeat unit spans residues Met-24–Arg-105. Tyr-85 carries the phosphotyrosine modification. A 1,2-diacyl-sn-glycero-3-phospho-(1D-myo-inositol-4,5-bisphosphate) contacts are provided by residues Lys-109–Lys-116 and Arg-135–Arg-143. Gelsolin-like repeat units follow at residues Asn-144–Ala-215, Thr-265–Phe-339, Leu-407–Met-486, Asn-524–Trp-592, and Thr-631–Phe-704. The segment at Phe-628–Phe-819 is required for interaction with F-actin. A headpiece region spans residues Asp-731–Phe-819. In terms of domain architecture, HP spans Glu-753 to Phe-819. Tyr-758 carries the post-translational modification Phosphotyrosine.

The protein belongs to the villin/gelsolin family. As to quaternary structure, associates (via C-terminus) with actin. Interacts with F-actin. Interacts with SCARF1; the interaction occurs in embryonic dorsal root ganglions at 18 dpc and induces neurite-like outgrowth. Interacts with PLCE1. Interacts with ACTR2 and ACTR3; associates with the ARP2/3 complex. Expressed in dorsal root ganglion (DRG) neurons and superior cervical ganglia (SCG). Expressed in podocytes.

The protein resides in the cytoplasm. It localises to the cytoskeleton. Its subcellular location is the cell projection. It is found in the neuron projection. The protein localises to the axon. The protein resides in the lamellipodium. It localises to the cell junction. Its subcellular location is the focal adhesion. Its function is as follows. Ca(2+)-regulated actin-binding protein which plays an important role in actin bundling. May have a unique function in the morphogenesis of neuronal cells which form ganglia. Required for SREC1-mediated regulation of neurite-like outgrowth. Plays a role in regenerative sensory axon outgrowth and remodeling processes after peripheral injury in neonates. Involved in the formation of long fine actin-containing filopodia-like structures in fibroblast. Plays a role in ciliogenesis. In podocytes, controls lamellipodia formation through the regulation of EGF-induced diacylglycerol generation by PLCE1 and ARP2/3 complex assembly. This is Advillin from Rattus norvegicus (Rat).